A 394-amino-acid polypeptide reads, in one-letter code: Cytohesin-4 (394 aa).

Residues Ser-12 to Leu-65 are a coiled coil. The region spanning Glu-54–Glu-241 is the SEC7 domain. The 117-residue stretch at Asn-259 to Thr-375 folds into the PH domain. A 1,2-diacyl-sn-glycero-3-phospho-(1D-myo-inositol-3,4,5-trisphosphate) contacts are provided by residues Lys-268 to Thr-275, Arg-279, Tyr-290, and Arg-300. Residues Arg-386–Gln-394 are C-terminal autoinhibitory region.

As to expression, expressed predominantly in peripheral blood leukocytes.

The protein localises to the cell membrane. Its function is as follows. Promotes guanine-nucleotide exchange on ARF1 and ARF5. Promotes the activation of ARF factors through replacement of GDP with GTP. The polypeptide is Cytohesin-4 (CYTH4) (Homo sapiens (Human)).